The chain runs to 76 residues: ATP synthase subunit 9, mitochondrial (76 aa).

2 helical membrane-spanning segments follow: residues 14–34 and 56–76; these read ISTI…AALI and ALSE…LFAV.

This sequence belongs to the ATPase C chain family. In terms of assembly, F-type ATPases have 2 components, CF(1) - the catalytic core - and CF(0) - the membrane proton channel. CF(1) has five subunits: alpha(3), beta(3), gamma(1), delta(1), epsilon(1). CF(0) has three main subunits: a, b and c.

It is found in the mitochondrion membrane. Functionally, mitochondrial membrane ATP synthase (F(1)F(0) ATP synthase or Complex V) produces ATP from ADP in the presence of a proton gradient across the membrane which is generated by electron transport complexes of the respiratory chain. F-type ATPases consist of two structural domains, F(1) - containing the extramembraneous catalytic core and F(0) - containing the membrane proton channel, linked together by a central stalk and a peripheral stalk. During catalysis, ATP synthesis in the catalytic domain of F(1) is coupled via a rotary mechanism of the central stalk subunits to proton translocation. Part of the complex F(0) domain. A homomeric c-ring of probably 10 subunits is part of the complex rotary element. This Candida glabrata (strain ATCC 2001 / BCRC 20586 / JCM 3761 / NBRC 0622 / NRRL Y-65 / CBS 138) (Yeast) protein is ATP synthase subunit 9, mitochondrial (ATP9).